The following is a 100-amino-acid chain: Colipase-like protein 2 (100 aa).

The signal sequence occupies residues 1-21 (MAAALALVAGVLSGAVLPLWS). 5 disulfide bridges follow: Cys-34–Cys-45, Cys-40–Cys-56, Cys-44–Cys-78, Cys-66–Cys-86, and Cys-80–Cys-97.

This sequence belongs to the colipase family.

The protein localises to the secreted. This chain is Colipase-like protein 2 (CLPSL2), found in Homo sapiens (Human).